A 463-amino-acid chain; its full sequence is Elongation factor 1-alpha (463 aa).

One can recognise a tr-type G domain in the interval K5–T242. Positions G14–S21 are G1. G14–S21 is a binding site for GTP. Positions G70–D74 are G2. The tract at residues D91 to G94 is G3. GTP is bound by residues D91–H95 and N153–D156. The G4 stretch occupies residues N153–D156. The interval S194–F196 is G5. 5-glutamyl glycerylphosphorylethanolamine is present on residues E301 and E374. Residues K443–K463 form a disordered region. The segment covering G446–A455 has biased composition (polar residues).

This sequence belongs to the TRAFAC class translation factor GTPase superfamily. Classic translation factor GTPase family. EF-Tu/EF-1A subfamily.

Its subcellular location is the cytoplasm. Functionally, this protein promotes the GTP-dependent binding of aminoacyl-tRNA to the A-site of ribosomes during protein biosynthesis. The polypeptide is Elongation factor 1-alpha (Caenorhabditis elegans).